The chain runs to 85 residues: UPF0297 protein LBA0418 (85 aa).

Belongs to the UPF0297 family.

The sequence is that of UPF0297 protein LBA0418 from Lactobacillus acidophilus (strain ATCC 700396 / NCK56 / N2 / NCFM).